The sequence spans 227 residues: Cytidylate kinase (227 aa).

12-20 contacts ATP; that stretch reads GPSGAGKGT.

It belongs to the cytidylate kinase family. Type 1 subfamily.

The protein resides in the cytoplasm. It catalyses the reaction CMP + ATP = CDP + ADP. The enzyme catalyses dCMP + ATP = dCDP + ADP. The chain is Cytidylate kinase from Salmonella paratyphi A (strain ATCC 9150 / SARB42).